Here is a 255-residue protein sequence, read N- to C-terminus: Coniferyl-alcohol dehydrogenase (255 aa).

NAD(+) is bound by residues 12-17 (GVSSGI), aspartate 36, 51-52 (DL), and glycine 77. Serine 117 contacts substrate. Tyrosine 157 and lysine 161 together coordinate NAD(+). The Proton acceptor role is filled by tyrosine 157.

The protein belongs to the short-chain dehydrogenases/reductases (SDR) family.

It catalyses the reaction (E)-coniferol + NADP(+) = (E)-coniferaldehyde + NADPH + H(+). Catalyzes the conversion of coniferyl alcohol into coniferyl aldehyde in the eugenol degradation pathway. Specific for coniferyl alcohol; does not act on cinnamyl alcohol, 4-coumaryl alcohol or sinapyl alcohol. The polypeptide is Coniferyl-alcohol dehydrogenase (calA) (Pseudomonas sp. (strain HR199 / DSM 7063)).